The primary structure comprises 227 residues: Probable cytokinin riboside 5'-monophosphate phosphoribohydrolase LOGL9 (227 aa).

Over residues 1 to 15 (MYISSPHTSHFTSID) the composition is skewed to polar residues. The segment at 1-26 (MYISSPHTSHFTSIDRSPAVVSESDR) is disordered. Substrate is bound by residues E117, 135 to 136 (RK), and 152 to 158 (GYGTLEE).

The protein belongs to the LOG family. Expressed in roots, leaves and stems.

It catalyses the reaction N(6)-(dimethylallyl)adenosine 5'-phosphate + H2O = N(6)-dimethylallyladenine + D-ribose 5-phosphate. The enzyme catalyses 9-ribosyl-trans-zeatin 5'-phosphate + H2O = trans-zeatin + D-ribose 5-phosphate. In terms of biological role, cytokinin-activating enzyme working in the direct activation pathway. Phosphoribohydrolase that converts inactive cytokinin nucleotides to the biologically active free-base forms. This chain is Probable cytokinin riboside 5'-monophosphate phosphoribohydrolase LOGL9 (LOGL9), found in Oryza sativa subsp. japonica (Rice).